We begin with the raw amino-acid sequence, 353 residues long: Inactive ubiquitin thioesterase OTULINL (353 aa).

Residues 1–80 (MEAPRSAPRE…KWWIGYLQRK (80 aa)) form a required for membrane binding region. An OTU domain is found at 125–353 (KCVRAVKRDN…NGHHYHIPVF (229 aa)).

This sequence belongs to the peptidase C65 family. Otulin subfamily. In terms of assembly, does not bind ubiquitin or ubiquitin-like proteins.

Its subcellular location is the cytoplasm. The protein resides in the endoplasmic reticulum membrane. It is found in the nucleus envelope. Its function is as follows. Lacks deubiquitinase activity. This is Inactive ubiquitin thioesterase OTULINL from Mus musculus (Mouse).